The sequence spans 295 residues: Ankyrin repeat and SOCS box protein 17 (295 aa).

Residues 146–176 form an ANK repeat; it reads SGITPLFYVAQTRQSNIFKILLQYGILEREK. The region spanning 232-295 is the SOCS box domain; sequence LGRRPIISNW…RLQNYLNLEI (64 aa).

It belongs to the ankyrin SOCS box (ASB) family.

Its pathway is protein modification; protein ubiquitination. Its function is as follows. May be a substrate-recognition component of a SCF-like ECS (Elongin-Cullin-SOCS-box protein) E3 ubiquitin-protein ligase complex which mediates the ubiquitination and subsequent proteasomal degradation of target proteins. This is Ankyrin repeat and SOCS box protein 17 (ASB17) from Macaca fascicularis (Crab-eating macaque).